A 146-amino-acid chain; its full sequence is Hemoglobin subunit beta (146 aa).

A Globin domain is found at 2-146 (QWSESERTII…VVSALGKQYH (145 aa)). Residues histidine 63 and histidine 92 each coordinate heme b.

The protein belongs to the globin family. As to quaternary structure, heterotetramer of two alpha chains and two beta chains. Red blood cells.

In terms of biological role, involved in oxygen transport from gills to the various peripheral tissues. The polypeptide is Hemoglobin subunit beta (hbb) (Pogonophryne scotti (Saddleback plunderfish)).